The chain runs to 503 residues: DnaJ homolog subfamily C member 3 (503 aa).

The signal sequence occupies residues 1–31 (MVSAAASAGRLGSALPFLLVLLDLQYQGAEC). TPR repeat units follow at residues 37–70 (VEKQ…DSDN), 71–104 (YIAY…KQDF), 105–137 (TSRL…NPSN), 153–186 (LQRL…CVWD), 187–220 (AELR…KSDN), 221–254 (TEAF…DQDH), 267–300 (LNKQ…EPDV), 305–338 (TRAK…EPTN), and 339–372 (VNAL…SEND). A disulfide bridge links Cys-247 with Cys-257. Cys-312 and Cys-328 form a disulfide bridge. Residues 374 to 392 (QIREGLERAQRMLKQSQKR) form a flexible linker region. A J domain is found at 393–461 (DYYKILGVKR…EMRRKFDAGE (69 aa)).

Its subcellular location is the endoplasmic reticulum. May be involved in the unfolded protein response (UPR) during ER stress. This is DnaJ homolog subfamily C member 3 (DNAJC3) from Gallus gallus (Chicken).